A 216-amino-acid chain; its full sequence is Octanoyltransferase (216 aa).

The 179-residue stretch at 35–213 folds into the BPL/LPL catalytic domain; sequence NSNPDFIWIG…TIEEEFNFDF (179 aa). Substrate is bound by residues 77–84, 144–146, and 157–159; these read RGGEVTCH, SIG, and GFS. Cys175 acts as the Acyl-thioester intermediate in catalysis.

The protein belongs to the LipB family.

Its subcellular location is the cytoplasm. It carries out the reaction octanoyl-[ACP] + L-lysyl-[protein] = N(6)-octanoyl-L-lysyl-[protein] + holo-[ACP] + H(+). Its pathway is protein modification; protein lipoylation via endogenous pathway; protein N(6)-(lipoyl)lysine from octanoyl-[acyl-carrier-protein]: step 1/2. In terms of biological role, catalyzes the transfer of endogenously produced octanoic acid from octanoyl-acyl-carrier-protein onto the lipoyl domains of lipoate-dependent enzymes. Lipoyl-ACP can also act as a substrate although octanoyl-ACP is likely to be the physiological substrate. The chain is Octanoyltransferase from Prochlorococcus marinus (strain MIT 9301).